Here is a 410-residue protein sequence, read N- to C-terminus: MFKFYTMDDFDYSGSRVLVRVDINSPVDPHTGRILDDTRMRLHSKTLKELVDENAKVAILAHQSRPGKRDFTTMEEHSKVLSNILDMPVTYVEDIFGCAARESIRNMENGDIILLENVRFYSEEVLKRDPKVQAETHLVRKLSSVVDYYINDAFAAAHRSQPSLVGFPLKLPSAAGRLMEREVKTLYKIIKNVEKPCVYILGGVKIDDSIMIMKNILKNGSADYILTSGLVANVFLEASGIDIKEKNRKILYRKNYKKFIKMAKKLKDKYGEKILTPVDVAINKNGKRIDVPIDDIPNFPIYDIGMETIKIYAEKIREAKTIFANGPAGVFEEQQFSIGTEDLLNAIASSNAFSVIAGGHLAAAAEKMGISNKINHISSGGGACIAFLSGEELPAIKVLEEARKRSDKYI.

Substrate contacts are provided by residues aspartate 22 to asparagine 24, arginine 39, histidine 62 to arginine 65, arginine 119, and arginine 159. Residues glutamate 332 and glycine 358–leucine 361 each bind ATP.

This sequence belongs to the phosphoglycerate kinase family. In terms of assembly, homodimer.

The protein resides in the cytoplasm. The enzyme catalyses (2R)-3-phosphoglycerate + ATP = (2R)-3-phospho-glyceroyl phosphate + ADP. Its pathway is carbohydrate degradation; glycolysis; pyruvate from D-glyceraldehyde 3-phosphate: step 2/5. The protein is Phosphoglycerate kinase (pgk) of Methanothermus fervidus (strain ATCC 43054 / DSM 2088 / JCM 10308 / V24 S).